Reading from the N-terminus, the 260-residue chain is Zinc import ATP-binding protein ZnuC (260 aa).

The region spanning 18 to 234 (IRLQEVAVTF…PEYQKLFGSH (217 aa)) is the ABC transporter domain. Position 50–57 (50–57 (GNNGAGKT)) interacts with ATP. Residues 241 to 260 (VFPHDHHDHSGPALAGGGRG) form a disordered region.

This sequence belongs to the ABC transporter superfamily. Zinc importer (TC 3.A.1.15.5) family. As to quaternary structure, the complex is composed of two ATP-binding proteins (ZnuC), two transmembrane proteins (ZnuB) and a solute-binding protein (ZnuA).

Its subcellular location is the cell inner membrane. The enzyme catalyses Zn(2+)(out) + ATP(in) + H2O(in) = Zn(2+)(in) + ADP(in) + phosphate(in) + H(+)(in). In terms of biological role, part of the ABC transporter complex ZnuABC involved in zinc import. Responsible for energy coupling to the transport system. The protein is Zinc import ATP-binding protein ZnuC of Halorhodospira halophila (strain DSM 244 / SL1) (Ectothiorhodospira halophila (strain DSM 244 / SL1)).